The sequence spans 1067 residues: Carbamoyl phosphate synthase large chain (1067 aa).

The segment at 1–401 (MPLNKDIKKV…AFLKGIRSLE (401 aa)) is carboxyphosphate synthetic domain. ATP contacts are provided by Arg129, Arg169, Gly175, Gly176, Lys208, Val210, Glu215, Gly241, Ile242, His243, Gln284, and Glu298. Residues 133 to 327 (RDMMNRINQP…IAKVAAKIAL (195 aa)) enclose the ATP-grasp 1 domain. The Mg(2+) site is built by Gln284, Glu298, and Asn300. Residues Gln284, Glu298, and Asn300 each coordinate Mn(2+). The segment at 402–549 (IGKYSLEHKK…YSTYEQYDEV (148 aa)) is oligomerization domain. The segment at 550–932 (VVSDNKKVVV…ALYKGFVGAS (383 aa)) is carbamoyl phosphate synthetic domain. An ATP-grasp 2 domain is found at 674 to 864 (DDLLERLNIA…IVDIATRIML (191 aa)). Residues Arg710, Lys749, Leu751, Glu755, Gly780, Val781, His782, Ser783, Gln823, and Glu835 each contribute to the ATP site. Positions 823, 835, and 837 each coordinate Mg(2+). The Mn(2+) site is built by Gln823, Glu835, and Asn837. The MGS-like domain occupies 933–1067 (MYTGDKGKTI…NRELEVFNLI (135 aa)). The allosteric domain stretch occupies residues 933–1067 (MYTGDKGKTI…NRELEVFNLI (135 aa)).

The protein belongs to the CarB family. As to quaternary structure, composed of two chains; the small (or glutamine) chain promotes the hydrolysis of glutamine to ammonia, which is used by the large (or ammonia) chain to synthesize carbamoyl phosphate. Tetramer of heterodimers (alpha,beta)4. Mg(2+) serves as cofactor. Requires Mn(2+) as cofactor.

The catalysed reaction is hydrogencarbonate + L-glutamine + 2 ATP + H2O = carbamoyl phosphate + L-glutamate + 2 ADP + phosphate + 2 H(+). The enzyme catalyses hydrogencarbonate + NH4(+) + 2 ATP = carbamoyl phosphate + 2 ADP + phosphate + 2 H(+). The protein operates within amino-acid biosynthesis; L-arginine biosynthesis; carbamoyl phosphate from bicarbonate: step 1/1. Its pathway is pyrimidine metabolism; UMP biosynthesis via de novo pathway; (S)-dihydroorotate from bicarbonate: step 1/3. In terms of biological role, large subunit of the glutamine-dependent carbamoyl phosphate synthetase (CPSase). CPSase catalyzes the formation of carbamoyl phosphate from the ammonia moiety of glutamine, carbonate, and phosphate donated by ATP, constituting the first step of 2 biosynthetic pathways, one leading to arginine and/or urea and the other to pyrimidine nucleotides. The large subunit (synthetase) binds the substrates ammonia (free or transferred from glutamine from the small subunit), hydrogencarbonate and ATP and carries out an ATP-coupled ligase reaction, activating hydrogencarbonate by forming carboxy phosphate which reacts with ammonia to form carbamoyl phosphate. The sequence is that of Carbamoyl phosphate synthase large chain from Clostridium perfringens (strain 13 / Type A).